Reading from the N-terminus, the 630-residue chain is ATP-dependent zinc metalloprotease FtsH (630 aa).

Over methionine 1–asparagine 7 the chain is Cytoplasmic. A helical membrane pass occupies residues isoleucine 8–threonine 28. The Periplasmic segment spans residues aspartate 29 to tryptophan 111. A helical membrane pass occupies residues tryptophan 112–isoleucine 132. Residues methionine 133–lysine 630 lie on the Cytoplasmic side of the membrane. Position 203–210 (glycine 203–threonine 210) interacts with ATP. Position 425 (histidine 425) interacts with Zn(2+). Glutamate 426 is an active-site residue. Histidine 429 and aspartate 501 together coordinate Zn(2+). The interval lysine 601–lysine 630 is disordered. Over residues leucine 608–glutamate 619 the composition is skewed to acidic residues. Over residues asparagine 620–lysine 630 the composition is skewed to basic and acidic residues.

It in the central section; belongs to the AAA ATPase family. This sequence in the C-terminal section; belongs to the peptidase M41 family. As to quaternary structure, homohexamer. Zn(2+) is required as a cofactor.

It localises to the cell inner membrane. In terms of biological role, acts as a processive, ATP-dependent zinc metallopeptidase for both cytoplasmic and membrane proteins. Plays a role in the quality control of integral membrane proteins. The chain is ATP-dependent zinc metalloprotease FtsH from Halothermothrix orenii (strain H 168 / OCM 544 / DSM 9562).